Consider the following 246-residue polypeptide: MAGHSKWANTKHRKAAQDAKRGKIFTKIIRELVTAARLGGGDAGSNPRLRAAIDKALANNMTRDTLNRAIARGVGGDDDANMETIIYEGYGPGGTAVMVECLSDNRNRTVAEVRHAFTKTGGNLGTDGSVAYLFSKKGVISFDAGDEDAIMEAALEAGAEDVVTFDDGAIDVYTAWEEMGAVRDALAAMGLKADNAEVSMIPSTKADMDAETAPKLLRLIDMLEDCDDVQEVYHNGEISDEVAATL.

Belongs to the TACO1 family.

It is found in the cytoplasm. The chain is Probable transcriptional regulatory protein Ent638_2432 from Enterobacter sp. (strain 638).